Consider the following 329-residue polypeptide: Beta-tectorin (329 aa).

An N-terminal signal peptide occupies residues 1–17; that stretch reads MVAVTVYLMVILAQAFA. Residues 19-287 form the ZP domain; sequence PCTPNKADVI…VTCDKRKQRM (269 aa). N80, N104, N116, and N145 each carry an N-linked (GlcNAc...) asparagine glycan. C204 and C264 form a disulfide bridge. G304 carries the GPI-anchor amidated glycine lipid modification. The propeptide at 305 to 329 is removed in mature form; it reads LSRFYMLSDVIFHLLFAIGFCAILL.

In terms of assembly, may form homomeric filament after self-association or heteromeric filament after association with alpha-tectorin. The N-terminus is blocked. In terms of processing, N-glycosylated. Post-translationally, the presence of a hydrophobic C-terminus preceded by a potential cleavage site strongly suggests that tectorins are synthesized as glycosylphosphatidylinositol-linked, membrane-bound precursors. Tectorins are targeted to the apical surface of the inner ear epithelia by the lipid and proteolytically released into the extracellular compartment. As to expression, exclusively expressed in the inner ear, where it is found in basilar papilla, clear cells, supporting cells, cuboidal cells and the lagena macula.

The protein localises to the cell membrane. The protein resides in the secreted. It is found in the extracellular space. Its subcellular location is the extracellular matrix. Functionally, one of the major non-collagenous components of the tectorial membrane. The tectorial membrane is an extracellular matrix of the inner ear that covers the neuroepithelium of the cochlea and contacts the stereocilia bundles of specialized sensory hair cells. Sound induces movement of these hair cells relative to the tectorial membrane, deflects the stereocilia and leads to fluctuations in hair-cell membrane potential, transducing sound into electrical signals. In Gallus gallus (Chicken), this protein is Beta-tectorin (TECTB).